Reading from the N-terminus, the 609-residue chain is Aspartate--tRNA(Asp/Asn) ligase (609 aa).

Glu177 is an L-aspartate binding site. An aspartate region spans residues 201 to 204 (QLFK). L-aspartate is bound at residue Arg223. Residues 223 to 225 (RDE) and Gln232 each bind ATP. Position 461 (His461) interacts with L-aspartate. Glu499 provides a ligand contact to ATP. An L-aspartate-binding site is contributed by Arg506. 551 to 554 (GVDR) is an ATP binding site.

This sequence belongs to the class-II aminoacyl-tRNA synthetase family. Type 1 subfamily. In terms of assembly, homodimer.

The protein localises to the cytoplasm. The catalysed reaction is tRNA(Asx) + L-aspartate + ATP = L-aspartyl-tRNA(Asx) + AMP + diphosphate. In terms of biological role, aspartyl-tRNA synthetase with relaxed tRNA specificity since it is able to aspartylate not only its cognate tRNA(Asp) but also tRNA(Asn). Reaction proceeds in two steps: L-aspartate is first activated by ATP to form Asp-AMP and then transferred to the acceptor end of tRNA(Asp/Asn). The sequence is that of Aspartate--tRNA(Asp/Asn) ligase from Synechococcus sp. (strain CC9605).